A 368-amino-acid polypeptide reads, in one-letter code: MVDAVKADPFGKVNAIDVLDLASLEARAEKVLGRGEFGYISEGSDDGYTMHRNTTAFQDVHMLPRVLQGVENPDQSTTFMGAKLASPLLTAPIASNTLAHPSGELGLAKGAKEAGIMMSQSTFASKTIAETAAVSDGAPYMFQLYMPKDWEYCQYLLDEAKQAGALAIILTADSTLGGYREKDVMNHYHLKGRLANLEGYNTGQSGVGAGGLFKESMQKLDLGLISKLASYSGLPIIIKGIQHPADAVAAITAGAAGIYVSNHGGRQLDGAPGAIEQLPAIAAAVDHRVPIIFDGGVQRGTHVLKALALGADLVGIGRPFSYGLALGGWQGVKDVADHLKMEINIAMQLTGCQTMADVKQMKVKTTFA.

One can recognise an FMN hydroxy acid dehydrogenase domain in the interval 13–368 (VNAIDVLDLA…KQMKVKTTFA (356 aa)). Position 39 (tyrosine 39) interacts with pyruvate. Residues 92–94 (PIA), serine 121, and glutamine 143 contribute to the FMN site. Residue tyrosine 145 participates in pyruvate binding. Residue threonine 171 coordinates FMN. Arginine 180 serves as a coordination point for pyruvate. FMN is bound by residues lysine 239 and serine 261. Pyruvate contacts are provided by histidine 263 and arginine 266. Histidine 263 functions as the Proton acceptor in the catalytic mechanism. FMN is bound by residues 294–298 (DGGVQ) and arginine 318.

Belongs to the FMN-dependent alpha-hydroxy acid dehydrogenase family. In terms of assembly, homotetramer. FMN is required as a cofactor.

The catalysed reaction is (S)-lactate + O2 = pyruvate + H2O2. It catalyses the reaction 2-hydroxyoctanoate + O2 = 2-oxooctanoate + H2O2. Its function is as follows. Catalyzes the oxidation of (S)-lactate (L-lactate) to pyruvate, with a reduction of O2 to H2O2. To a lesser extent is also able to use 2-hydroxyoctanoate as substrate. May be involved in the utilization of L-lactate as an energy source for growth. The polypeptide is L-lactate oxidase (Lacticaseibacillus rhamnosus (strain LMS2-1)).